A 270-amino-acid chain; its full sequence is 3-methyl-2-oxobutanoate hydroxymethyltransferase (270 aa).

Mg(2+) is bound by residues Asp-43 and Asp-82. 3-methyl-2-oxobutanoate is bound by residues 43 to 44 (DS), Asp-82, and Lys-112. Glu-114 contributes to the Mg(2+) binding site. Glu-179 (proton acceptor) is an active-site residue.

It belongs to the PanB family. Homodecamer; pentamer of dimers. It depends on Mg(2+) as a cofactor.

The protein resides in the cytoplasm. The enzyme catalyses 3-methyl-2-oxobutanoate + (6R)-5,10-methylene-5,6,7,8-tetrahydrofolate + H2O = 2-dehydropantoate + (6S)-5,6,7,8-tetrahydrofolate. It functions in the pathway cofactor biosynthesis; (R)-pantothenate biosynthesis; (R)-pantoate from 3-methyl-2-oxobutanoate: step 1/2. In terms of biological role, catalyzes the reversible reaction in which hydroxymethyl group from 5,10-methylenetetrahydrofolate is transferred onto alpha-ketoisovalerate to form ketopantoate. The protein is 3-methyl-2-oxobutanoate hydroxymethyltransferase of Oceanobacillus iheyensis (strain DSM 14371 / CIP 107618 / JCM 11309 / KCTC 3954 / HTE831).